The following is an 860-amino-acid chain: Glucans biosynthesis glucosyltransferase H (860 aa).

The next 6 membrane-spanning stretches (helical) occupy residues 141 to 161 (FILL…MKGI), 187 to 207 (VLPY…FCWV), 515 to 535 (VFLT…FLVL), 572 to 592 (LFST…MLIW), 599 to 619 (FGGV…SVLL), and 682 to 702 (FLWW…VSVI).

This sequence belongs to the glycosyltransferase 2 family. OpgH subfamily.

It localises to the cell inner membrane. The protein operates within glycan metabolism; osmoregulated periplasmic glucan (OPG) biosynthesis. Functionally, involved in the biosynthesis of osmoregulated periplasmic glucans (OPGs). The protein is Glucans biosynthesis glucosyltransferase H of Pseudomonas paraeruginosa (strain DSM 24068 / PA7) (Pseudomonas aeruginosa (strain PA7)).